Reading from the N-terminus, the 375-residue chain is Alcohol dehydrogenase class-3 chain H (375 aa).

At A1 the chain carries N-acetylalanine. C46, H68, C98, C101, C104, C112, and C175 together coordinate Zn(2+).

Belongs to the zinc-containing alcohol dehydrogenase family. Class-III subfamily. Homodimer or heterodimer with L chain. Zn(2+) serves as cofactor.

Its subcellular location is the cytoplasm. The enzyme catalyses a primary alcohol + NAD(+) = an aldehyde + NADH + H(+). The catalysed reaction is a secondary alcohol + NAD(+) = a ketone + NADH + H(+). It carries out the reaction S-(hydroxymethyl)glutathione + NADP(+) = S-formylglutathione + NADPH + H(+). It catalyses the reaction S-(hydroxymethyl)glutathione + NAD(+) = S-formylglutathione + NADH + H(+). In terms of biological role, class-III ADH is remarkably ineffective in oxidizing ethanol, but it readily catalyzes the oxidation of long-chain primary alcohols and the oxidation of S-(hydroxymethyl) glutathione. The chain is Alcohol dehydrogenase class-3 chain H from Gadus morhua (Atlantic cod).